Consider the following 210-residue polypeptide: Secreted effector protein SteA (210 aa).

It localises to the secreted. The protein localises to the host cytoplasm. In terms of biological role, effector proteins function to alter host cell physiology and promote bacterial survival in host tissues. Could be required for passage of bacteria from the peritoneal cavity into the spleen, for survival and replication within host cells, or for avoiding host immune response. In Salmonella typhimurium (strain 14028s / SGSC 2262), this protein is Secreted effector protein SteA (steA).